We begin with the raw amino-acid sequence, 707 residues long: Tryptophan synthase (707 aa).

The tryptophan synthase alpha chain stretch occupies residues 1 to 297 (MSEQLRQTFA…VKKEILDEFD (297 aa)). Active-site proton acceptor residues include E50 and D61. Residues 298-707 (ENHKHPIRFG…DLRFEEDPSA (410 aa)) form a tryptophan synthase beta chain region. K384 is subject to N6-(pyridoxal phosphate)lysine. Phosphoserine is present on residues S540 and S683.

It in the N-terminal section; belongs to the TrpA family. This sequence in the C-terminal section; belongs to the TrpB family. Pyridoxal 5'-phosphate serves as cofactor.

It carries out the reaction (1S,2R)-1-C-(indol-3-yl)glycerol 3-phosphate + L-serine = D-glyceraldehyde 3-phosphate + L-tryptophan + H2O. Its pathway is amino-acid biosynthesis; L-tryptophan biosynthesis; L-tryptophan from chorismate: step 5/5. The chain is Tryptophan synthase (TRP5) from Saccharomyces cerevisiae (strain ATCC 204508 / S288c) (Baker's yeast).